The primary structure comprises 303 residues: uncharacterized protein (303 aa).

NADP(+) is bound by residues 7–12 (GAGGVG) and N101. The active-site Proton donor is K184. Position 267 (E267) interacts with NADP(+).

This sequence belongs to the ketopantoate reductase family.

This is an uncharacterized protein from Bacillus subtilis (strain 168).